A 432-amino-acid chain; its full sequence is uncharacterized protein (432 aa).

A run of 12 helical transmembrane segments spans residues Val35 to Leu55, Leu60 to Gly80, Val112 to Ser132, Val144 to Leu164, Leu185 to Ala205, Ala209 to Leu229, Ala242 to Leu262, Gly274 to Met294, Leu313 to Leu333, Ala359 to Leu379, Leu384 to Leu404, and Thr408 to Ala428.

The protein to M.tuberculosis Rv3630 and M.bovis Mb3654.

The protein localises to the cell membrane. This is an uncharacterized protein from Mycobacterium tuberculosis (strain CDC 1551 / Oshkosh).